The chain runs to 312 residues: Protein dif-1 (312 aa).

3 Solcar repeats span residues 2 to 93 (SDVL…GKWL), 102 to 193 (MTFI…LKKK), and 203 to 289 (LSPG…TLAA). Helical transmembrane passes span 5–25 (LLNF…GHPF), 69–89 (MAAP…GCAV), 104–124 (FIQN…VMVP), 172–192 (TLLR…YLKK), 209–229 (LMAG…ADVL), and 261–282 (LFKG…CFFG).

Belongs to the mitochondrial carrier (TC 2.A.29) family.

It localises to the mitochondrion inner membrane. Its function is as follows. Seems to play a role in the maintenance of tissue differentiation in the developing embryo, but not for its initiation. The protein is Protein dif-1 (dif-1) of Caenorhabditis elegans.